A 214-amino-acid polypeptide reads, in one-letter code: MLFTQLIILFTFISQIICVSISDLNNIALIQFTKRRGSSGHSSGGGHSSSGSHSSGGGHSSSGSSSSGSKGGGSSSGSSSGSSSGTKGGGSSSGSSSGSRNWGSNQYHCTGNSCGYGNYFAPSAAAAAVGYGTGRYTGGTKYGNNQYHCSGSTCGYGNYYAPTAASAAAGYGSARYAGQHNNSTSTKTSFGVSLNIPSTHFYVIGLAAAYSIVL.

A signal peptide spans 1 to 18; sequence MLFTQLIILFTFISQIIC. Residues 36 to 101 are disordered; sequence RGSSGHSSGG…SSGSSSGSRN (66 aa). Residues 42-60 are compositionally biased toward gly residues; that stretch reads SSGGGHSSSGSHSSGGGHS. A compositionally biased stretch (low complexity) spans 76–85; that stretch reads SGSSSGSSSG. N182 is a glycosylation site (N-linked (GlcNAc...) asparagine). Residue G191 is the site of GPI-anchor amidated glycine attachment. The propeptide at 192-214 is removed in mature form; that stretch reads VSLNIPSTHFYVIGLAAAYSIVL.

The protein belongs to the PGA37 family.

Its subcellular location is the secreted. The protein localises to the cell membrane. Predicted GPI-anchored protein which may have a role during host infection. In Candida albicans (strain SC5314 / ATCC MYA-2876) (Yeast), this protein is Predicted GPI-anchored protein 57 (PGA57).